Consider the following 296-residue polypeptide: Phosphatidylglycerol--prolipoprotein diacylglyceryl transferase (296 aa).

4 helical membrane-spanning segments follow: residues 10–30 (IAFS…LAAF), 57–77 (LLFY…MLFY), 92–112 (VWEG…ACGL), and 119–139 (LHFF…LGFG). Position 140 (R140) interacts with a 1,2-diacyl-sn-glycero-3-phospho-(1'-sn-glycerol). A run of 3 helical transmembrane segments spans residues 194-214 (QLYE…TFSM), 220-240 (YAVS…VEFV), and 255-275 (LTMG…LLAL).

It belongs to the Lgt family.

It is found in the cell inner membrane. It catalyses the reaction L-cysteinyl-[prolipoprotein] + a 1,2-diacyl-sn-glycero-3-phospho-(1'-sn-glycerol) = an S-1,2-diacyl-sn-glyceryl-L-cysteinyl-[prolipoprotein] + sn-glycerol 1-phosphate + H(+). It participates in protein modification; lipoprotein biosynthesis (diacylglyceryl transfer). Its function is as follows. Catalyzes the transfer of the diacylglyceryl group from phosphatidylglycerol to the sulfhydryl group of the N-terminal cysteine of a prolipoprotein, the first step in the formation of mature lipoproteins. The sequence is that of Phosphatidylglycerol--prolipoprotein diacylglyceryl transferase from Xanthomonas campestris pv. campestris (strain 8004).